A 717-amino-acid chain; its full sequence is Catalase-peroxidase (717 aa).

The interval 1–20 (MSGKCPVMHGGNTSTGTSNK) is disordered. A compositionally biased stretch (polar residues) spans 11–20 (GNTSTGTSNK). Positions 91 to 219 (WHSAGSYRLA…LAAVQMGLIY (129 aa)) form a cross-link, tryptophyl-tyrosyl-methioninium (Trp-Tyr) (with M-245). His92 functions as the Proton acceptor in the catalytic mechanism. The segment at residues 219-245 (YVNPEGVNGQPDPQKTAEQVRETFARM) is a cross-link (tryptophyl-tyrosyl-methioninium (Tyr-Met) (with W-91)). His260 is a heme b binding site.

Belongs to the peroxidase family. Peroxidase/catalase subfamily. Homodimer or homotetramer. It depends on heme b as a cofactor. In terms of processing, formation of the three residue Trp-Tyr-Met cross-link is important for the catalase, but not the peroxidase activity of the enzyme.

The enzyme catalyses H2O2 + AH2 = A + 2 H2O. The catalysed reaction is 2 H2O2 = O2 + 2 H2O. Functionally, bifunctional enzyme with both catalase and broad-spectrum peroxidase activity. The chain is Catalase-peroxidase from Chromohalobacter salexigens (strain ATCC BAA-138 / DSM 3043 / CIP 106854 / NCIMB 13768 / 1H11).